A 1425-amino-acid polypeptide reads, in one-letter code: Neuropathy target esterase sws (1425 aa).

Residues Met-1–Thr-34 are Lumenal-facing. The helical transmembrane segment at Val-35 to Phe-55 threads the bilayer. Residues Lys-56–Asn-1425 are Cytoplasmic-facing. Ile-174–Arg-301 contributes to the a nucleoside 3',5'-cyclic phosphate binding site. Composition is skewed to polar residues over residues Thr-332–Ala-348 and Ser-357–Val-366. The segment at Thr-332 to Thr-410 is disordered. Residues Ser-367 to Pro-381 show a composition bias toward low complexity. 2 positions are modified to phosphoserine: Ser-444 and Ser-453. A nucleoside 3',5'-cyclic phosphate is bound by residues Glu-482–Arg-609 and Ile-598–Leu-727. The PNPLA domain occupies Leu-952–His-1118. A GXGXXG motif is present at residues Gly-956 to Gly-961. The GXSXG motif lies at Gly-983–Gly-987. Ser-985 functions as the Nucleophile in the catalytic mechanism. Catalysis depends on Asp-1105, which acts as the Proton acceptor. Positions Asp-1105–Gly-1107 match the DGA/G motif. Residue Ser-1160 is modified to Phosphoserine. The segment at Leu-1330 to Asn-1425 is disordered. The span at Ser-1337–Arg-1347 shows a compositional bias: low complexity. Residues Ser-1348–His-1358 show a composition bias toward basic and acidic residues. Low complexity predominate over residues Thr-1380–Gln-1403. Positions Leu-1404 to Arg-1416 are enriched in basic and acidic residues.

Belongs to the NTE family. As to quaternary structure, interacts with Pka-C3; interaction inhibits the catalytic function of Pka-C3 and the esterase activity of sws. In terms of tissue distribution, isoform A and isoform B are expressed in the entire brain cortex; cortical cell bodies of adult brain. Sws and Pka-C3 are colocalized in all neurons.

It localises to the endoplasmic reticulum membrane. It catalyses the reaction a 1-acyl-sn-glycero-3-phosphocholine + H2O = sn-glycerol 3-phosphocholine + a fatty acid + H(+). Functionally, phospholipase B that deacylates intracellular phosphatidylcholine (PtdCho), generating glycerophosphocholine (GroPtdCho). This deacylation occurs at both sn-2 and sn-1 positions of PtdCho. Its specific chemical modification by certain organophosphorus (OP) compounds leads to distal axonopathy. Plays a role in the signaling mechanism between neurons and glia that regulates glia wrapping during development of the adult brain. Essential for membrane lipid homeostasis and cell survival in both neurons and glia of the adult brain. In Drosophila melanogaster (Fruit fly), this protein is Neuropathy target esterase sws (sws).